The sequence spans 507 residues: ATP synthase subunit alpha, chloroplastic (507 aa).

Residue 170 to 177 (GDRQTGKT) participates in ATP binding.

It belongs to the ATPase alpha/beta chains family. F-type ATPases have 2 components, CF(1) - the catalytic core - and CF(0) - the membrane proton channel. CF(1) has five subunits: alpha(3), beta(3), gamma(1), delta(1), epsilon(1). CF(0) has four main subunits: a, b, b' and c.

The protein localises to the plastid. It localises to the chloroplast thylakoid membrane. The enzyme catalyses ATP + H2O + 4 H(+)(in) = ADP + phosphate + 5 H(+)(out). Its function is as follows. Produces ATP from ADP in the presence of a proton gradient across the membrane. The alpha chain is a regulatory subunit. The chain is ATP synthase subunit alpha, chloroplastic from Cucumis sativus (Cucumber).